The following is a 434-amino-acid chain: Glucose-1-phosphate adenylyltransferase (434 aa).

Alpha-D-glucose 1-phosphate contacts are provided by residues tyrosine 112, glycine 178, 193-194, and serine 211; that span reads EK.

This sequence belongs to the bacterial/plant glucose-1-phosphate adenylyltransferase family. In terms of assembly, homotetramer.

The enzyme catalyses alpha-D-glucose 1-phosphate + ATP + H(+) = ADP-alpha-D-glucose + diphosphate. It functions in the pathway glycan biosynthesis; glycogen biosynthesis. Functionally, involved in the biosynthesis of ADP-glucose, a building block required for the elongation reactions to produce glycogen. Catalyzes the reaction between ATP and alpha-D-glucose 1-phosphate (G1P) to produce pyrophosphate and ADP-Glc. The polypeptide is Glucose-1-phosphate adenylyltransferase (Mannheimia succiniciproducens (strain KCTC 0769BP / MBEL55E)).